The sequence spans 342 residues: tRNA dimethylallyltransferase (342 aa).

39 to 46 is an ATP binding site; the sequence is GPTGSGKT. 41–46 lines the substrate pocket; it reads TGSGKT. The segment at 64–67 is interaction with substrate tRNA; that stretch reads DSMQ.

Belongs to the IPP transferase family. In terms of assembly, monomer. Requires Mg(2+) as cofactor.

The catalysed reaction is adenosine(37) in tRNA + dimethylallyl diphosphate = N(6)-dimethylallyladenosine(37) in tRNA + diphosphate. Catalyzes the transfer of a dimethylallyl group onto the adenine at position 37 in tRNAs that read codons beginning with uridine, leading to the formation of N6-(dimethylallyl)adenosine (i(6)A). The chain is tRNA dimethylallyltransferase from Chlamydia abortus (strain DSM 27085 / S26/3) (Chlamydophila abortus).